A 230-amino-acid chain; its full sequence is Sugar fermentation stimulation protein homolog (230 aa).

This sequence belongs to the SfsA family.

This Caldivirga maquilingensis (strain ATCC 700844 / DSM 13496 / JCM 10307 / IC-167) protein is Sugar fermentation stimulation protein homolog.